The primary structure comprises 436 residues: Proline--tRNA ligase (436 aa).

It belongs to the class-II aminoacyl-tRNA synthetase family. ProS type 2 subfamily. Homodimer.

It is found in the cytoplasm. The enzyme catalyses tRNA(Pro) + L-proline + ATP = L-prolyl-tRNA(Pro) + AMP + diphosphate. Its function is as follows. Catalyzes the attachment of proline to tRNA(Pro) in a two-step reaction: proline is first activated by ATP to form Pro-AMP and then transferred to the acceptor end of tRNA(Pro). The sequence is that of Proline--tRNA ligase from Neorickettsia sennetsu (strain ATCC VR-367 / Miyayama) (Ehrlichia sennetsu).